The sequence spans 1558 residues: Calmodulin-regulated spectrin-associated protein 1-B (1558 aa).

Residues 231–346 (WYWKLVPVRY…FIAELFWWFE (116 aa)) enclose the Calponin-homology (CH) domain. Composition is skewed to polar residues over residues 400 to 417 (VQNS…SGFS), 440 to 450 (ACRNRSNSLTQ), and 504 to 516 (ASTV…SHPG). Disordered regions lie at residues 400 to 464 (VQNS…SDKR), 504 to 523 (ASTV…VRRI), 551 to 585 (NDIT…SDSR), 602 to 675 (AKEK…APGQ), 737 to 790 (TKEL…VASG), 803 to 850 (QRFG…QNKD), and 943 to 968 (DRSK…SSSP). A compositionally biased stretch (basic and acidic residues) spans 602–620 (AKEKSISLNKEEESGEGRQ). Over residues 643–658 (QTLNRTFTPNTSSEFE) the composition is skewed to polar residues. Residues 737–772 (TKELHPDKKQHFEEEVESAKLREDMNVKEHEDKDGG) show a composition bias toward basic and acidic residues. 2 stretches are compositionally biased toward low complexity: residues 776–790 (SSPG…VASG) and 812–822 (RSSTSSSQRTT). A coiled-coil region spans residues 849–887 (KDNANMLASELVQLHMQLEEKRRAIESQKKKMEILTARQ). A compositionally biased stretch (basic and acidic residues) spans 943 to 955 (DRSKEAEEPEKAS). Positions 971-1004 (VEEEVDLNECNRSIELLNEAIGSIQQQMMQLSLQ) form a coiled coil. Disordered stretches follow at residues 1041-1131 (FVEP…TFHL), 1257-1293 (LRKQ…RREL), 1305-1344 (ELCE…KCPA), and 1360-1414 (LASV…ITST). Positions 1080 to 1090 (SSTPTPTDSPS) are enriched in low complexity. Residues 1106–1115 (DFVQSSVRSE) show a composition bias toward polar residues. A coiled-coil region spans residues 1243–1303 (AFLLKQQRKA…IKQEYLRKKQ (61 aa)). Basic residues predominate over residues 1317 to 1328 (PKTKPKKQRLKS). In terms of domain architecture, CKK spans 1421 to 1555 (GPKLFKEPSA…QAKRPAGPKK (135 aa)).

It belongs to the CAMSAP1 family.

It is found in the cytoplasm. Its subcellular location is the cytoskeleton. Key microtubule-organizing protein that specifically binds the minus-end of non-centrosomal microtubules and regulates their dynamics and organization. Specifically recognizes growing microtubule minus-ends and stabilizes microtubules. Acts on free microtubule minus-ends that are not capped by microtubule-nucleating proteins or other factors and protects microtubule minus-ends from depolymerization. In contrast to camsap2 and camsap3, tracks along the growing tips of minus-end microtubules without significantly affecting the polymerization rate: binds at the very tip of the microtubules minus-end and acts as a minus-end tracking protein (-TIP) that dissociates from microtubules after allowing tubulin incorporation. Through interaction with spectrin may regulate neurite outgrowth. The protein is Calmodulin-regulated spectrin-associated protein 1-B (camsap1b) of Danio rerio (Zebrafish).